The primary structure comprises 226 residues: Cytidylate kinase (226 aa).

Residue Gly-12–Thr-20 coordinates ATP.

The protein belongs to the cytidylate kinase family. Type 1 subfamily.

It is found in the cytoplasm. It catalyses the reaction CMP + ATP = CDP + ADP. The enzyme catalyses dCMP + ATP = dCDP + ADP. This chain is Cytidylate kinase, found in Xanthomonas campestris pv. campestris (strain 8004).